The primary structure comprises 1193 residues: DNA-directed RNA polymerase subunit beta (1193 aa).

Over residues 1152 to 1161 the composition is skewed to acidic residues; sequence IEMRDLEDDE. Residues 1152–1193 form a disordered region; that stretch reads IEMRDLEDDEETKKADGLALSNDEDAADLAPVDLERDAVTKE. The segment covering 1184-1193 has biased composition (basic and acidic residues); the sequence is DLERDAVTKE.

It belongs to the RNA polymerase beta chain family. The RNAP catalytic core consists of 2 alpha, 1 beta, 1 beta' and 1 omega subunit. When a sigma factor is associated with the core the holoenzyme is formed, which can initiate transcription.

The catalysed reaction is RNA(n) + a ribonucleoside 5'-triphosphate = RNA(n+1) + diphosphate. DNA-dependent RNA polymerase catalyzes the transcription of DNA into RNA using the four ribonucleoside triphosphates as substrates. In Bacillus pumilus (strain SAFR-032), this protein is DNA-directed RNA polymerase subunit beta.